The primary structure comprises 206 residues: Large ribosomal subunit protein uL4 (206 aa).

The segment at 46 to 77 is disordered; it reads GTRAQKDREQVRHSTKKPFKQKGTGRARAGMT. Basic residues predominate over residues 58-70; sequence HSTKKPFKQKGTG.

This sequence belongs to the universal ribosomal protein uL4 family. As to quaternary structure, part of the 50S ribosomal subunit.

In terms of biological role, one of the primary rRNA binding proteins, this protein initially binds near the 5'-end of the 23S rRNA. It is important during the early stages of 50S assembly. It makes multiple contacts with different domains of the 23S rRNA in the assembled 50S subunit and ribosome. Forms part of the polypeptide exit tunnel. The sequence is that of Large ribosomal subunit protein uL4 from Polaromonas naphthalenivorans (strain CJ2).